Reading from the N-terminus, the 229-residue chain is Endonuclease V (229 aa).

Mg(2+)-binding residues include D46 and D114.

Belongs to the endonuclease V family. Mg(2+) is required as a cofactor.

Its subcellular location is the cytoplasm. It catalyses the reaction Endonucleolytic cleavage at apurinic or apyrimidinic sites to products with a 5'-phosphate.. DNA repair enzyme involved in the repair of deaminated bases. Selectively cleaves double-stranded DNA at the second phosphodiester bond 3' to a deoxyinosine leaving behind the intact lesion on the nicked DNA. In Streptomyces avermitilis (strain ATCC 31267 / DSM 46492 / JCM 5070 / NBRC 14893 / NCIMB 12804 / NRRL 8165 / MA-4680), this protein is Endonuclease V.